Consider the following 211-residue polypeptide: Endo-1,4-beta-xylanase 3 (211 aa).

An N-terminal signal peptide occupies residues 1-27; that stretch reads MKVTAAFAGLLVTAFAAPVPEPVLVSR. The region spanning 28 to 210 is the GH11 domain; that stretch reads SAGINYVQNY…GAGSASVTIS (183 aa). The active-site Nucleophile is the Glu-106. Cysteines 119 and 138 form a disulfide. Residue Glu-197 is the Proton donor of the active site.

The protein belongs to the glycosyl hydrolase 11 (cellulase G) family.

Its subcellular location is the secreted. It carries out the reaction Endohydrolysis of (1-&gt;4)-beta-D-xylosidic linkages in xylans.. Its pathway is glycan degradation; xylan degradation. The polypeptide is Endo-1,4-beta-xylanase 3 (xynC) (Aspergillus kawachii (strain NBRC 4308) (White koji mold)).